A 664-amino-acid chain; its full sequence is Frizzled-3 (664 aa).

Positions 1–16 (MAAYLISFIWVSVILA) are cleaved as a signal peptide. Residues 17–204 (QKSMGHSLFA…REELSFARYF (188 aa)) lie on the Extracellular side of the membrane. The FZ domain maps to 22–135 (HSLFACEPIT…CSRFPDCDEP (114 aa)). 5 disulfide bridges follow: Cys-27-Cys-88, Cys-35-Cys-81, Cys-72-Cys-109, Cys-98-Cys-132, and Cys-102-Cys-126. The N-linked (GlcNAc...) asparagine glycan is linked to Asn-41. Residues 205–225 (IGVISIVCLSATLFTFLTFLI) traverse the membrane as a helical segment. The Cytoplasmic portion of the chain corresponds to 226 to 236 (DVTRFRYPERP). A helical transmembrane segment spans residues 237-257 (IIFYAVCYMMVSLIFFIGFLL). At 258–287 (EDKVACNGANPSQYKASTVTQGSHNKACTM) the chain is on the extracellular side. A helical membrane pass occupies residues 288–308 (LFMVLYFFTMAGSVWWVILTI). Topologically, residues 309 to 327 (TWFLAAVPKWGSEAIEKKA) are cytoplasmic. A helical membrane pass occupies residues 328 to 348 (LLFHASAWGIPGTLTIILLAM). Residues 349–373 (NKIEGDNISGVCFVGLYDVHALRYF) are Extracellular-facing. Residue Asn-355 is glycosylated (N-linked (GlcNAc...) asparagine). Residues 374–394 (VLAPLCLDVVVGVSLLLAGII) form a helical membrane-spanning segment. The Cytoplasmic portion of the chain corresponds to 395–419 (SLNRVRIEIPLEKENQDKLVKFMIR). Residues 420–440 (IGVFSILYLVPLLVVIGCYFY) form a helical membrane-spanning segment. At 441 to 476 (EQAYRGVWETTWVQERCREYHIPCPYKVTQTSRPDL) the chain is on the extracellular side. Residues 477–497 (ILFLMKYLMLLVVGIPSVFWV) form a helical membrane-spanning segment. Residues 498–664 (GSKKTCFEWA…RVIEADATSA (167 aa)) are Cytoplasmic-facing. A Lys-Thr-X-X-X-Trp motif, mediates interaction with the PDZ domain of Dvl family members motif is present at residues 501 to 506 (KTCFEW). The disordered stretch occupies residues 537 to 664 (RDPNTPIVRK…RVIEADATSA (128 aa)). Composition is skewed to polar residues over residues 549-564 (GTST…STQL) and 573-585 (KAGS…SSYH).

The protein belongs to the G-protein coupled receptor Fz/Smo family. As to expression, expression restricted to the early nervous system.

Its subcellular location is the membrane. The protein resides in the cell membrane. It is found in the cell surface. The protein localises to the apical cell membrane. Functionally, receptor for Wnt proteins. Most of frizzled receptors are coupled to the beta-catenin canonical signaling pathway, which leads to the activation of disheveled proteins, inhibition of GSK-3 kinase, nuclear accumulation of beta-catenin and activation of Wnt target genes. A second signaling pathway involving PKC and calcium fluxes has been seen for some family members, but it is not yet clear if it represents a distinct pathway or if it can be integrated in the canonical pathway, as PKC seems to be required for Wnt-mediated inactivation of GSK-3 kinase. Both pathways seem to involve interactions with G-proteins. Activated by Wnt8. Involved in transduction and intercellular transmission of polarity information during tissue morphogenesis and/or in differentiated tissues. Plays a role in controlling early axon growth and guidance processes necessary for the formation of a subset of central and peripheral major fiber tracts. Involved in the migration of cranial neural crest cells. May also be implicated in the transmission of sensory information from the trunk and limbs to the brain. Controls commissural sensory axons guidance after midline crossing along the anterior-posterior axis in the developing spinal cord in a Wnt-dependent signaling pathway. Together with FZD6, is involved in the neural tube closure and plays a role in the regulation of the establishment of planar cell polarity (PCP). Promotes neurogenesis by maintaining sympathetic neuroblasts within the cell cycle in a beta-catenin-dependent manner. The polypeptide is Frizzled-3 (fzd3) (Xenopus laevis (African clawed frog)).